The following is a 267-amino-acid chain: AMP/ADP-polyphosphate phosphotransferase (267 aa).

It belongs to the polyphosphate kinase 2 (PPK2) family. Class III subfamily. Mn(2+) serves as cofactor.

It catalyses the reaction [phosphate](n) + ADP = [phosphate](n+1) + AMP. It carries out the reaction [phosphate](n) + ATP = [phosphate](n+1) + ADP. In terms of biological role, uses inorganic polyphosphate (polyP) as a donor to convert both AMP to ADP and ADP to ATP. Can also use GMP, CMP, UMP, GDP, CDP and UDP. The chain is AMP/ADP-polyphosphate phosphotransferase from Meiothermus ruber (strain ATCC 35948 / DSM 1279 / VKM B-1258 / 21) (Thermus ruber).